The primary structure comprises 1010 residues: BrkA autotransporter (1010 aa).

The signal sequence occupies residues 1-42; it reads MYLDRFRQCPSSLQIPRSAWRLHALAAALALAGMARLAPAAA. The 269-residue stretch at 742–1010 folds into the Autotransporter domain; that stretch reads LRADAGGPWA…SFHAGYRYSF (269 aa).

The protein localises to the periplasm. The protein resides in the secreted. It is found in the cell surface. It localises to the cell outer membrane. Functionally, inhibits the classical pathway of complement activation and prevents accumulation of deposited C4. This chain is BrkA autotransporter, found in Bordetella pertussis (strain Tohama I / ATCC BAA-589 / NCTC 13251).